The primary structure comprises 91 residues: uncharacterized protein (91 aa).

The Integrase catalytic domain maps to 1–91 (MLTFWHWKWL…YQNILRENGI (91 aa)).

This is an uncharacterized protein from Haemophilus influenzae (strain ATCC 51907 / DSM 11121 / KW20 / Rd).